The sequence spans 332 residues: Tetraacyldisaccharide 4'-kinase (332 aa).

Position 60–67 (60–67) interacts with ATP; the sequence is TVGGTGKT.

The protein belongs to the LpxK family.

It carries out the reaction a lipid A disaccharide + ATP = a lipid IVA + ADP + H(+). It functions in the pathway glycolipid biosynthesis; lipid IV(A) biosynthesis; lipid IV(A) from (3R)-3-hydroxytetradecanoyl-[acyl-carrier-protein] and UDP-N-acetyl-alpha-D-glucosamine: step 6/6. Functionally, transfers the gamma-phosphate of ATP to the 4'-position of a tetraacyldisaccharide 1-phosphate intermediate (termed DS-1-P) to form tetraacyldisaccharide 1,4'-bis-phosphate (lipid IVA). The chain is Tetraacyldisaccharide 4'-kinase from Pseudomonas aeruginosa (strain LESB58).